An 874-amino-acid polypeptide reads, in one-letter code: Alanine--tRNA ligase (874 aa).

Zn(2+)-binding residues include His562, His566, Cys665, and His669.

Belongs to the class-II aminoacyl-tRNA synthetase family. Requires Zn(2+) as cofactor.

The protein resides in the cytoplasm. It catalyses the reaction tRNA(Ala) + L-alanine + ATP = L-alanyl-tRNA(Ala) + AMP + diphosphate. Functionally, catalyzes the attachment of alanine to tRNA(Ala) in a two-step reaction: alanine is first activated by ATP to form Ala-AMP and then transferred to the acceptor end of tRNA(Ala). Also edits incorrectly charged Ser-tRNA(Ala) and Gly-tRNA(Ala) via its editing domain. The chain is Alanine--tRNA ligase from Pseudomonas syringae pv. syringae (strain B728a).